The following is a 366-amino-acid chain: Chorismate synthase (366 aa).

NADP(+)-binding residues include R48 and R54. FMN-binding positions include 125 to 127 (RSS), 238 to 239 (NA), G278, 293 to 297 (KPTSS), and R319.

The protein belongs to the chorismate synthase family. Homotetramer. FMNH2 serves as cofactor.

It carries out the reaction 5-O-(1-carboxyvinyl)-3-phosphoshikimate = chorismate + phosphate. It functions in the pathway metabolic intermediate biosynthesis; chorismate biosynthesis; chorismate from D-erythrose 4-phosphate and phosphoenolpyruvate: step 7/7. Its function is as follows. Catalyzes the anti-1,4-elimination of the C-3 phosphate and the C-6 proR hydrogen from 5-enolpyruvylshikimate-3-phosphate (EPSP) to yield chorismate, which is the branch point compound that serves as the starting substrate for the three terminal pathways of aromatic amino acid biosynthesis. This reaction introduces a second double bond into the aromatic ring system. This is Chorismate synthase from Paraburkholderia phymatum (strain DSM 17167 / CIP 108236 / LMG 21445 / STM815) (Burkholderia phymatum).